The sequence spans 246 residues: Bis(5'-nucleosyl)-tetraphosphatase PrpE [asymmetrical] (246 aa).

The protein belongs to the PrpE family. The cofactor is Ni(2+).

It catalyses the reaction P(1),P(4)-bis(5'-guanosyl) tetraphosphate + H2O = GMP + GTP + 2 H(+). Functionally, asymmetrically hydrolyzes Ap4p to yield AMP and ATP. This Bacillus cereus (strain Q1) protein is Bis(5'-nucleosyl)-tetraphosphatase PrpE [asymmetrical].